The primary structure comprises 535 residues: Peptide chain release factor 3 (535 aa).

The tr-type G domain maps to 8–276; it reads ARRRTFAIIS…ALVDLAPQPG (269 aa). GTP is bound by residues 17–24, 85–89, and 139–142; these read SHPDAGKT, DTPGH, and NKMD.

This sequence belongs to the TRAFAC class translation factor GTPase superfamily. Classic translation factor GTPase family. PrfC subfamily.

The protein resides in the cytoplasm. Functionally, increases the formation of ribosomal termination complexes and stimulates activities of RF-1 and RF-2. It binds guanine nucleotides and has strong preference for UGA stop codons. It may interact directly with the ribosome. The stimulation of RF-1 and RF-2 is significantly reduced by GTP and GDP, but not by GMP. This is Peptide chain release factor 3 from Bordetella avium (strain 197N).